The sequence spans 374 residues: Fasciclin-like arabinogalactan protein CTB11 (374 aa).

The first 18 residues, 1-18 (MHFPALAVAGCLLSRATA), serve as a signal peptide directing secretion. FAS1 domains lie at 19-171 (QSLD…DANM) and 173-302 (LPHN…DGAL). N-linked (GlcNAc...) asparagine glycosylation is found at Asn-52, Asn-72, Asn-120, Asn-132, and Asn-176. Residues 328-348 (ILASHQLTLLAVLAMALVSIL) traverse the membrane as a helical segment.

It belongs to the fasciclin-like AGP family.

It localises to the membrane. It functions in the pathway mycotoxin biosynthesis. Fasciclin-like arabinogalactan protein; part of the gene cluster that mediates the biosynthesis of cercosporin, a light-activated, non-host-selective toxin. The perylenequinone chromophore of cercosporin absorbs light energy to attain an electronically-activated triplet state and produces active oxygen species such as the hydroxyl radical, superoxide, hydrogen peroxide or singlet oxygen upon reaction with oxygen molecules. These reactive oxygen species cause damage to various cellular components including lipids, proteins and nucleic acids. The first step of cercosporin biosynthesis is performed by the polyketide synthase CTB1 which catalyzes the formation of nor-toralactone. The starter unit acyltransferase (SAT) domain of CTB1 initiates polyketide extension by the selective utilization of acetyl-CoA, which is elongated to the heptaketide in the beta-ketoacyl synthase (KS) domain by successive condensations with six malonyl units introduced by the malonyl acyltransferase (MAT) domain. The product template (PT) domain catalyzes C4-C9 and C2-C11 aldol cyclizations and dehydrations to a trihydroxynaphthalene, which is thought to be delivered to the thioesterase (TE) domain for product release. The bifunctional enzyme CTB3 then methylates nor-toralactone to toralactone before conducting an unusual oxidative aromatic ring opening. The O-methyltransferase CTB2 further methylates the nascent OH-6 of the CBT3 product, blocking further oxidation at this site before the reductase CTB6 reduces the 2-oxopropyl ketone at position C7, giving naphthalene. The FAD-dependent monooxygenase CTB5 in concert with the multicopper oxidase CTB12 are responsible for homodimerization of naphthalene with CTB7 installing the dioxepine moiety, finally producing cercosporin. The fasciclin domain-containing protein CTB11 might act with CTB5 and CTB12 whereas the roles of CTB9 and CTB10 have still to be elucidated. This Cercospora beticola (Sugarbeet leaf spot fungus) protein is Fasciclin-like arabinogalactan protein CTB11.